Reading from the N-terminus, the 382-residue chain is Enoyl-[acyl-carrier-protein] reductase, mitochondrial (382 aa).

A mitochondrion-targeting transit peptide spans Met1–Met17. Tyr77 serves as the catalytic Proton donor. Residues Asn159, Thr187–Val190, Arg210–Arg212, Tyr285–Met288, Phe310–Val312, and Lys375 each bind NADP(+).

The protein belongs to the zinc-containing alcohol dehydrogenase family. Quinone oxidoreductase subfamily. In terms of assembly, homodimer.

It is found in the mitochondrion matrix. The catalysed reaction is a 2,3-saturated acyl-[ACP] + NADP(+) = a (2E)-enoyl-[ACP] + NADPH + H(+). Functionally, catalyzes the NADPH-dependent reduction of trans-2-enoyl thioesters in mitochondrial fatty acid synthesis (fatty acid synthesis type II). Fatty acid chain elongation in mitochondria uses acyl carrier protein (ACP) as an acyl group carrier, but the enzyme accepts both ACP and CoA thioesters as substrates in vitro. Required for respiration and the maintenance of the mitochondrial compartment. The sequence is that of Enoyl-[acyl-carrier-protein] reductase, mitochondrial (ETR1) from Kluyveromyces lactis (strain ATCC 8585 / CBS 2359 / DSM 70799 / NBRC 1267 / NRRL Y-1140 / WM37) (Yeast).